We begin with the raw amino-acid sequence, 1212 residues long: Nucleolar protein 6 (1212 aa).

Disordered regions lie at residues 1-72 (MGKI…PVSI) and 1156-1212 (KREQ…KSLS). The segment covering 1197 to 1212 (LKRKSLIKSRPLKSLS) has biased composition (basic residues).

This sequence belongs to the NRAP family. In terms of assembly, part of the small subunit (SSU) processome, composed of more than 70 proteins and the RNA chaperone small nucleolar RNA (snoRNA) U3.

The protein localises to the nucleus. Its subcellular location is the nucleolus. It localises to the chromosome. Part of the small subunit (SSU) processome, first precursor of the small eukaryotic ribosomal subunit. During the assembly of the SSU processome in the nucleolus, many ribosome biogenesis factors, an RNA chaperone and ribosomal proteins associate with the nascent pre-rRNA and work in concert to generate RNA folding, modifications, rearrangements and cleavage as well as targeted degradation of pre-ribosomal RNA by the RNA exosome. In Drosophila pseudoobscura pseudoobscura (Fruit fly), this protein is Nucleolar protein 6.